The sequence spans 629 residues: MAEPQQQLVDIDPDFEPLSRPRSCTWPLHRPEFSEQPGNSNTSSPAPSVKPEQGIVDFINSLSLLEETEDYPDEKPVLLNDFHCQDNCAHPQQQHPQQPNPQLTHPQQVPPLPAPASGSSPAAAQRKSSSSRRNAWGNMSYADLITKAIESSPEKRLTLSQIYEWMVKSVPYFKDKGDSNSSAGWKNSIRHNLSLHSRFVRVQNEGTGKSSWWMLNPEGGKSGKSPRRRATSMDNNSKFTKSRGRAAKKKMSLQGGLDGGSNSPGSQYPKWLGSPNSHSNDDFEPWGNFRTRASSDASTLSGRRSPFLPEEDEAAEVHIGYPGTKLGGPLPSLSEVAGHHGSENMMDNLLENLNLISPKNNTQGSQEAQTALSSPLMQGSPGYPSYTSPNMGPQPQVQQDYRKCLYGQGGVGGLNPISIPTLSDSKPGGYGPFVGQYNCAPGLLKELLTADADPRGELMQSGEGQPVLPSYASQGQMAQGGKMITHPHLHAHPRSLHQLPSPAMGLNGCAMLPHGHPVRLSSMKPQPHLPHHTHLGRGGGEAGMPSYTNGNGFHRHGAIAHHHHSHPERLPSDLDDMLIDQLDVECDVERVLHDTLMDGDALDFNFDPMSSQQSFTHSVKTSTHNWVSG.

4 disordered regions span residues 1–54 (MAEP…PEQG), 88–134 (CAHP…SRRN), 211–308 (SWWM…SPFL), and 359–397 (KNNT…QPQV). Residues 36–46 (QPGNSNTSSPA) are compositionally biased toward polar residues. Low complexity-rich tracts occupy residues 90-107 (HPQQ…THPQ) and 115-133 (PASG…SSRR). A DNA-binding region (fork-head) is located at residues 136-230 (WGNMSYADLI…KSGKSPRRRA (95 aa)). The segment covering 240–251 (TKSRGRAAKKKM) has biased composition (basic residues). Composition is skewed to polar residues over residues 291-302 (TRASSDASTLSG), 359-377 (KNNT…SPLM), and 385-397 (SYTS…QPQV).

It localises to the cytoplasm. Its subcellular location is the nucleus. Its function is as follows. Transcription factor that regulates metabolic homeostasis in response to oxidative stress. Binds to the consensus sequence 5'-TT[G/A]TTTTG-3' and the related Daf-16 family binding element (DBE) with consensus sequence 5'-TT[G/A]TTTAC-3'. Main regulator of redox balance and osteoblast numbers and controls bone mass. Orchestrates the endocrine function of the skeleton in regulating glucose metabolism. May act as a positive regulator of apoptosis in cardiac smooth muscle cells as a result of its transcriptional activation of pro-apoptotic genes. The sequence is that of Forkhead box protein O1-B (foxo1b) from Danio rerio (Zebrafish).